The primary structure comprises 495 residues: Putative aldehyde dehydrogenase AldA (495 aa).

212–218 is a binding site for NAD(+); that stretch reads GKGSESG. Residues Glu-256 and Cys-290 contribute to the active site.

Belongs to the aldehyde dehydrogenase family.

It catalyses the reaction an aldehyde + NAD(+) + H2O = a carboxylate + NADH + 2 H(+). In Staphylococcus aureus (strain MSSA476), this protein is Putative aldehyde dehydrogenase AldA (aldA).